We begin with the raw amino-acid sequence, 224 residues long: Glutathione peroxidase 3 (224 aa).

Residues 1 to 18 form the signal peptide; the sequence is MAPGSVLSLAVALATIIG. Asn38 is a glycosylation site (N-linked (GlcNAc...) asparagine). Residue Cys73 is part of the active site.

It belongs to the glutathione peroxidase family.

Its subcellular location is the secreted. It localises to the extracellular space. It carries out the reaction 2 glutathione + H2O2 = glutathione disulfide + 2 H2O. The chain is Glutathione peroxidase 3 (gpx-3) from Caenorhabditis elegans.